Reading from the N-terminus, the 106-residue chain is Ribonuclease P protein component 4 (106 aa).

Zn(2+)-binding residues include Cys-63, Cys-66, Cys-89, and Cys-92.

It belongs to the eukaryotic/archaeal RNase P protein component 4 family. As to quaternary structure, consists of a catalytic RNA component and at least 4-5 protein subunits. Zn(2+) is required as a cofactor.

The protein resides in the cytoplasm. It carries out the reaction Endonucleolytic cleavage of RNA, removing 5'-extranucleotides from tRNA precursor.. Part of ribonuclease P, a protein complex that generates mature tRNA molecules by cleaving their 5'-ends. In Methanosphaerula palustris (strain ATCC BAA-1556 / DSM 19958 / E1-9c), this protein is Ribonuclease P protein component 4.